The chain runs to 84 residues: Phosphoribosylformylglycinamidine synthase subunit PurS (84 aa).

It belongs to the PurS family. Homodimer. Part of the FGAM synthase complex composed of 1 PurL, 1 PurQ and 2 PurS subunits.

The protein localises to the cytoplasm. The catalysed reaction is N(2)-formyl-N(1)-(5-phospho-beta-D-ribosyl)glycinamide + L-glutamine + ATP + H2O = 2-formamido-N(1)-(5-O-phospho-beta-D-ribosyl)acetamidine + L-glutamate + ADP + phosphate + H(+). Its pathway is purine metabolism; IMP biosynthesis via de novo pathway; 5-amino-1-(5-phospho-D-ribosyl)imidazole from N(2)-formyl-N(1)-(5-phospho-D-ribosyl)glycinamide: step 1/2. Its function is as follows. Part of the phosphoribosylformylglycinamidine synthase complex involved in the purines biosynthetic pathway. Catalyzes the ATP-dependent conversion of formylglycinamide ribonucleotide (FGAR) and glutamine to yield formylglycinamidine ribonucleotide (FGAM) and glutamate. The FGAM synthase complex is composed of three subunits. PurQ produces an ammonia molecule by converting glutamine to glutamate. PurL transfers the ammonia molecule to FGAR to form FGAM in an ATP-dependent manner. PurS interacts with PurQ and PurL and is thought to assist in the transfer of the ammonia molecule from PurQ to PurL. The sequence is that of Phosphoribosylformylglycinamidine synthase subunit PurS from Methanothermobacter thermautotrophicus (strain ATCC 29096 / DSM 1053 / JCM 10044 / NBRC 100330 / Delta H) (Methanobacterium thermoautotrophicum).